Consider the following 125-residue polypeptide: Cu-Zn superoxide dismutase-like protein (125 aa).

Cysteines 52 and 102 form a disulfide.

This sequence belongs to the Cu-Zn superoxide dismutase family.

The protein localises to the host cytoplasm. In terms of biological role, virion protein with no enzymatic activity. The polypeptide is Cu-Zn superoxide dismutase-like protein (Bos taurus (Bovine)).